A 398-amino-acid chain; its full sequence is Probable RNA methyltransferase sce1580 (398 aa).

The tract at residues methionine 1 to alanine 24 is disordered. The active-site Proton acceptor is glutamate 140. The Radical SAM core domain maps to glycine 146–aspartate 378. Cysteines 153 and 383 form a disulfide. Positions 160, 164, and 167 each coordinate [4Fe-4S] cluster. S-adenosyl-L-methionine-binding positions include glycine 211–glutamate 212, serine 243, serine 265–asparagine 267, and asparagine 340. The active-site S-methylcysteine intermediate is the cysteine 383.

This sequence belongs to the radical SAM superfamily. RlmN family. Requires [4Fe-4S] cluster as cofactor.

The protein localises to the cytoplasm. This Sorangium cellulosum (strain So ce56) (Polyangium cellulosum (strain So ce56)) protein is Probable RNA methyltransferase sce1580.